The chain runs to 192 residues: uncharacterized protein (192 aa).

The Nudix hydrolase domain occupies 29–160; the sequence is HRQAAVLIPI…PLDIYRRGDS (132 aa). A Nudix box motif is present at residues 67 to 89; it reads GAVDDTDASVIAAALREAEEEVA. Mg(2+) contacts are provided by glutamate 83 and glutamate 87.

Belongs to the Nudix hydrolase family. PCD1 subfamily. Requires Mn(2+) as cofactor. The cofactor is Mg(2+).

Probably mediates the hydrolysis of some nucleoside diphosphate derivatives. This is an uncharacterized protein from Escherichia coli (strain SE11).